Here is a 305-residue protein sequence, read N- to C-terminus: GMP synthase [glutamine-hydrolyzing] subunit B (305 aa).

The GMPS ATP-PPase domain maps to 2-184; the sequence is VKPEKFIPKA…LQLPEEICER (183 aa). 29–35 contacts ATP; the sequence is SGGVDSS.

As to quaternary structure, heterodimer composed of a glutamine amidotransferase subunit (A) and a GMP-binding subunit (B).

It carries out the reaction XMP + L-glutamine + ATP + H2O = GMP + L-glutamate + AMP + diphosphate + 2 H(+). It functions in the pathway purine metabolism; GMP biosynthesis; GMP from XMP (L-Gln route): step 1/1. In terms of biological role, catalyzes the synthesis of GMP from XMP. This Methanosarcina acetivorans (strain ATCC 35395 / DSM 2834 / JCM 12185 / C2A) protein is GMP synthase [glutamine-hydrolyzing] subunit B (guaAB).